The sequence spans 83 residues: Small ribosomal subunit protein bS16 (83 aa).

This sequence belongs to the bacterial ribosomal protein bS16 family.

The protein is Small ribosomal subunit protein bS16 of Shewanella halifaxensis (strain HAW-EB4).